The primary structure comprises 422 residues: Ameloblastin (422 aa).

The signal sequence occupies residues 1-26; it reads MSASKIPLFKMKGLLLFLSLVKMSLA. Pro-42 is subject to Hydroxyproline. Ser-48 is subject to Phosphoserine. Residue Ser-117 is glycosylated (O-linked (GalNAc...) serine). The tract at residues 271–321 is disordered; it reads GLNQNSPKGGDFTVEVDSPVSVTKGPEKGEGPEGSPLQEASPDKGENPALL.

The protein belongs to the ameloblastin family. As to expression, ameloblast-specific.

It is found in the secreted. The protein resides in the extracellular space. Its subcellular location is the extracellular matrix. In terms of biological role, involved in the mineralization and structural organization of enamel. This chain is Ameloblastin (Ambn), found in Rattus norvegicus (Rat).